Here is a 220-residue protein sequence, read N- to C-terminus: Charged multivesicular body protein 3 (220 aa).

Gly-2 carries the N-myristoyl glycine lipid modification. The stretch at 22-54 (KIRKEMRVIDRQIRDIQREQEKVKRSIKESAKK) forms a coiled coil. The tract at residues 168 to 169 (IL) is important for autoinhibitory function. The segment at 181-220 (PSKVTDALPEPEITGAMAASDEEEEEDLEAMHSRLAALRS) is disordered. The short motif at 201–209 (DEEEEEDLE) is the MIT-interacting motif element. Interaction with STAMBP stretches follow at residues 203–207 (EEEED) and 219–220 (RS).

The protein belongs to the SNF7 family. Probable core component of the endosomal sorting required for transport complex III (ESCRT-III). ESCRT-III components are thought to multimerize to form a flat lattice on the perimeter membrane of the endosome. Several assembly forms of ESCRT-III may exist that interact and act sequentially.

It localises to the cytoplasm. The protein resides in the cytosol. Its subcellular location is the membrane. It is found in the endosome. The protein localises to the late endosome membrane. Probable core component of the endosomal sorting required for transport complex III (ESCRT-III) which is involved in multivesicular bodies (MVBs) formation and sorting of endosomal cargo proteins into MVBs. MVBs contain intraluminal vesicles (ILVs) that are generated by invagination and scission from the limiting membrane of the endosome and mostly are delivered to lysosomes enabling degradation of membrane proteins, such as stimulated growth factor receptors, lysosomal enzymes and lipids. Involved in late stages of cytokinesis. Plays a role in endosomal sorting/trafficking of EGF receptor. The sequence is that of Charged multivesicular body protein 3 (chmp3) from Xenopus laevis (African clawed frog).